The following is a 144-amino-acid chain: Peptidyl-Asp metalloendopeptidase (144 aa).

His64 is a Zn(2+) binding site. Glu65 is an active-site residue. His68 is a binding site for Zn(2+).

It belongs to the peptidase M72 family. Zn(2+) is required as a cofactor.

The enzyme catalyses Cleavage of Xaa-|-Asp, Xaa-|-Glu and Xaa-|-cysteic acid bonds.. Metalloprotease, specifically cleaves on the N-terminal side of aspartyl, glutamyl and cysteic acid residues. This Pseudomonas fragi protein is Peptidyl-Asp metalloendopeptidase.